Here is a 551-residue protein sequence, read N- to C-terminus: Probable inorganic carbon transporter subunit DabB2 (551 aa).

The next 14 helical transmembrane spans lie at 6–26, 42–62, 65–85, 86–106, 132–152, 187–207, 217–237, 252–272, 284–304, 321–341, 374–394, 404–424, 434–454, and 469–489; these read SHTT…AAVI, VQWT…SFLF, QQNL…LALS, IQVN…LSVI, GFFL…AIIA, LLLA…FSQI, LSIA…LKSA, PTPV…IIVL, ALLL…LVML, LGFM…LHLV, VVAW…IAAA, MLPA…LKAL, VAAG…EVFI, and PLLD…VAWL.

This sequence belongs to the inorganic carbon transporter (TC 9.A.2) DabB family. As to quaternary structure, forms a complex with DabA2, possibly a heterodimer.

It is found in the cell inner membrane. Uptake of inorganic carbon by cells in the presence of thiosulphate is fully inhibited by the uncouplers carbonyl cyanide m-chlorophenyl hydrazone (CCCP), carbonyl cyanide p-trifluoromethoxyphenyl hydrazone (FCCP), S13 or SF6847. Not inhibited by the ATPase inhibitor N,N-dicyclohexylcarbodiimide (DCCD). Inorganic carbon uptake is inhibited by the ionophore carbonyl cyanide m-chlorophenyl hydrazone (CCCP), suggesting uptake is coupled to a cation gradient. In terms of biological role, part of an energy-coupled inorganic carbon pump; its substrate may be carbon dioxide. Expression of both dabA2 and dabB2 (DAB2) restores growth in ambient air to E.coli deleted of its carbonic anhydrase genes (called CAfree, deletion of 'can' and 'cynT'); neither dabA2 or dabB2 alone is sufficient. Rescue is pH-independent, suggesting it transports CO(2) and not carbonate ions. Together the genes allow greater than normal uptake of inorganic carbon by E.coli. Uptake of carbon dioxide rather than bicarbonate has been suggested based on kinetic calculations. In Halothiobacillus neapolitanus (strain ATCC 23641 / c2) (Thiobacillus neapolitanus), this protein is Probable inorganic carbon transporter subunit DabB2.